Reading from the N-terminus, the 201-residue chain is MTSSGVLCLLGALSLQVLLLQPPGAQGAPNPDNSHSSSPAPPQTAQHLSQKSLKRETLKPAAHLVGDPSVQDSIHWRANTDHAFLRHGFSLSNNSLLVPTSGLYFVYSQVVFSGASCSEITPTLLYLSHEVLLFSSKYQVHVPLLSAQKSVCSGTQGPWMRSVYQGAVFLLTQGDRLSTYTDGVSHLLQSPSSVFFGAFAL.

An N-terminal signal peptide occupies residues 1–27; it reads MTSSGVLCLLGALSLQVLLLQPPGAQG. Residues 23–52 are disordered; it reads PGAQGAPNPDNSHSSSPAPPQTAQHLSQKS. Polar residues predominate over residues 31-51; the sequence is PDNSHSSSPAPPQTAQHLSQK. One can recognise a THD domain in the interval 60–201; the sequence is PAAHLVGDPS…SSVFFGAFAL (142 aa). Residue Asn-93 is glycosylated (N-linked (GlcNAc...) asparagine). Residues Cys-117 and Cys-152 are joined by a disulfide bond.

Belongs to the tumor necrosis factor family. As to quaternary structure, homotrimer, and heterotrimer of either two LTB and one LTA subunits or (less prevalent) two LTA and one LTB subunits. Interacts with TNFRSF14.

Its subcellular location is the secreted. It localises to the membrane. In terms of biological role, cytokine that in its homotrimeric form binds to TNFRSF1A/TNFR1, TNFRSF1B/TNFBR and TNFRSF14/HVEM. In its heterotrimeric form with LTB binds to TNFRSF3/LTBR. Lymphotoxin is produced by lymphocytes and is cytotoxic for a wide range of tumor cells in vitro and in vivo. This is Lymphotoxin-alpha (LTA) from Notamacropus eugenii (Tammar wallaby).